A 213-amino-acid polypeptide reads, in one-letter code: Ras-related protein Rab-25 (213 aa).

Residues Ser21, Gly24, Lys25, Thr26, Asn27, Ser38, His39, Thr43, and Thr44 each contribute to the GTP site. Thr26 provides a ligand contact to Mg(2+). Short sequence motifs (switch) lie at residues 35–49 (NEFSHDSRTTIGVEF) and 67–84 (DTAGLERYRAITSAYYRG). Residues Thr44 and Asp67 each contribute to the Mg(2+) site. GTP contacts are provided by Gly70, Asn125, Lys126, Asp128, Ala156, and Leu157. 2 S-geranylgeranyl cysteine lipidation sites follow: Cys209 and Cys210. Cys210 bears the Cysteine methyl ester mark. A propeptide spans 211 to 213 (ISL) (removed in mature form).

Belongs to the small GTPase superfamily. Rab family. As to quaternary structure, interacts (GTP-bound form) with RAB11FIP1, RAB11FIP2, RAB11FIP3 and RAB11FIP4. Interacts (via the hypervariable C-terminal region) with ITGB1 (via the cytoplasmic region); the interaction is GTP-dependent. Interacts with ITGAV. Associates with the integrin alpha-V/beta-1 heterodimer. Interacts with VPS33B. It depends on Mg(2+) as a cofactor.

The protein localises to the cell membrane. It is found in the cell projection. The protein resides in the pseudopodium membrane. It localises to the cytoplasmic vesicle. It carries out the reaction GTP + H2O = GDP + phosphate + H(+). Its activity is regulated as follows. Regulated by guanine nucleotide exchange factors (GEFs) which promote the exchange of bound GDP for free GTP. Regulated by GTPase activating proteins (GAPs) which increase the GTP hydrolysis activity. Inhibited by GDP dissociation inhibitors (GDIs) which prevent Rab-GDP dissociation. The small GTPases Rab are key regulators of intracellular membrane trafficking, from the formation of transport vesicles to their fusion with membranes. Rabs cycle between an inactive GDP-bound form and an active GTP-bound form that is able to recruit to membranes different set of downstream effectors directly responsible for vesicle formation, movement, tethering and fusion. RAB25 regulates epithelial cell differentiation, proliferation and survival, thereby playing key roles in tumorigenesis. Promotes invasive migration of cells in which it functions to localize and maintain integrin alpha-V/beta-1 at the tips of extending pseudopodia. Involved in the regulation of epithelial morphogenesis through the control of CLDN4 expression and localization at tight junctions. May selectively regulate the apical recycling pathway. Together with MYO5B regulates transcytosis. The chain is Ras-related protein Rab-25 (RAB25) from Canis lupus familiaris (Dog).